Here is a 454-residue protein sequence, read N- to C-terminus: GTPase Der (454 aa).

EngA-type G domains are found at residues 4-167 (AIVA…SEDK) and 188-363 (LELA…ASWQ). GTP contacts are provided by residues 10–17 (GKPNVGKS), 56–60 (DTPGL), 121–124 (NKTE), 194–201 (GRPNCGKS), 241–245 (DTAGV), and 306–309 (NKWD). In terms of domain architecture, KH-like spans 364-450 (KRVTTGTLNQ…PVRLSFVKGK (87 aa)).

It belongs to the TRAFAC class TrmE-Era-EngA-EngB-Septin-like GTPase superfamily. EngA (Der) GTPase family. Associates with the 50S ribosomal subunit.

Its function is as follows. GTPase that plays an essential role in the late steps of ribosome biogenesis. The chain is GTPase Der from Orientia tsutsugamushi (strain Ikeda) (Rickettsia tsutsugamushi).